Here is a 285-residue protein sequence, read N- to C-terminus: Pantothenate synthetase (285 aa).

30–37 (MGNLHDGH) serves as a coordination point for ATP. His37 serves as the catalytic Proton donor. Gln61 provides a ligand contact to (R)-pantoate. A beta-alanine-binding site is contributed by Gln61. 149–152 (GEKD) contacts ATP. Gln155 is a (R)-pantoate binding site. ATP contacts are provided by residues Ile178 and 186 to 189 (LSSR).

It belongs to the pantothenate synthetase family. As to quaternary structure, homodimer.

The protein resides in the cytoplasm. The enzyme catalyses (R)-pantoate + beta-alanine + ATP = (R)-pantothenate + AMP + diphosphate + H(+). It functions in the pathway cofactor biosynthesis; (R)-pantothenate biosynthesis; (R)-pantothenate from (R)-pantoate and beta-alanine: step 1/1. Functionally, catalyzes the condensation of pantoate with beta-alanine in an ATP-dependent reaction via a pantoyl-adenylate intermediate. The chain is Pantothenate synthetase from Buchnera aphidicola subsp. Acyrthosiphon pisum (strain 5A).